A 953-amino-acid polypeptide reads, in one-letter code: Translation initiation factor IF-2 (953 aa).

2 disordered regions span residues 48–248 and 279–363; these read SSFS…AELA and TKLK…TERK. Composition is skewed to basic and acidic residues over residues 80-89, 98-111, and 140-188; these read TGSEHAEKTQ, FKAE…EQAA, and QGDK…ENHK. Polar residues predominate over residues 191–207; it reads RFTNQKKQGRQEPQSKS. Residues 229-248 are compositionally biased toward basic and acidic residues; sequence RQSETRFRAQQEAKRLAELA. The segment covering 282-291 has biased composition (polar residues); the sequence is KSSNISAKST. The segment covering 300-317 has biased composition (basic and acidic residues); the sequence is ARPEKNRELTHHSQEGQK. The span at 322–338 shows a compositional bias: low complexity; sequence SWNSQNQVRNQKNSNWN. Residues 339–348 are compositionally biased toward basic residues; that stretch reads KNKKTKKGKN. The 170-residue stretch at 454-623 folds into the tr-type G domain; it reads ERAPVVTIMG…LLVAEVEELK (170 aa). A G1 region spans residues 463 to 470; sequence GHVDHGKT. 463 to 470 contacts GTP; the sequence is GHVDHGKT. Residues 488-492 are G2; that stretch reads GITQH. Positions 509–512 are G3; the sequence is DTPG. Residues 509–513 and 563–566 each bind GTP; these read DTPGH and NKID. The segment at 563–566 is G4; it reads NKID. Residues 599 to 601 are G5; the sequence is SAK.

The protein belongs to the TRAFAC class translation factor GTPase superfamily. Classic translation factor GTPase family. IF-2 subfamily.

The protein localises to the cytoplasm. Its function is as follows. One of the essential components for the initiation of protein synthesis. Protects formylmethionyl-tRNA from spontaneous hydrolysis and promotes its binding to the 30S ribosomal subunits. Also involved in the hydrolysis of GTP during the formation of the 70S ribosomal complex. In Streptococcus pyogenes serotype M18 (strain MGAS8232), this protein is Translation initiation factor IF-2.